We begin with the raw amino-acid sequence, 367 residues long: Protein RecA (367 aa).

73–80 (GPESSGKT) provides a ligand contact to ATP.

It belongs to the RecA family.

It is found in the cytoplasm. In terms of biological role, can catalyze the hydrolysis of ATP in the presence of single-stranded DNA, the ATP-dependent uptake of single-stranded DNA by duplex DNA, and the ATP-dependent hybridization of homologous single-stranded DNAs. It interacts with LexA causing its activation and leading to its autocatalytic cleavage. The polypeptide is Protein RecA (Delftia acidovorans (strain DSM 14801 / SPH-1)).